The primary structure comprises 270 residues: L-aspartate dehydrogenase (270 aa).

NAD(+) contacts are provided by Ala-123 and Asn-191. His-221 is an active-site residue.

This sequence belongs to the L-aspartate dehydrogenase family.

The enzyme catalyses L-aspartate + NADP(+) + H2O = oxaloacetate + NH4(+) + NADPH + H(+). It carries out the reaction L-aspartate + NAD(+) + H2O = oxaloacetate + NH4(+) + NADH + H(+). It functions in the pathway cofactor biosynthesis; NAD(+) biosynthesis; iminoaspartate from L-aspartate (dehydrogenase route): step 1/1. Its function is as follows. Specifically catalyzes the NAD or NADP-dependent dehydrogenation of L-aspartate to iminoaspartate. This Methanocella arvoryzae (strain DSM 22066 / NBRC 105507 / MRE50) protein is L-aspartate dehydrogenase.